Consider the following 283-residue polypeptide: Bifunctional protein FolD (283 aa).

NADP(+) is bound by residues 166 to 168 and Ile-232; that span reads GAS.

The protein belongs to the tetrahydrofolate dehydrogenase/cyclohydrolase family. Homodimer.

The enzyme catalyses (6R)-5,10-methylene-5,6,7,8-tetrahydrofolate + NADP(+) = (6R)-5,10-methenyltetrahydrofolate + NADPH. It catalyses the reaction (6R)-5,10-methenyltetrahydrofolate + H2O = (6R)-10-formyltetrahydrofolate + H(+). The protein operates within one-carbon metabolism; tetrahydrofolate interconversion. In terms of biological role, catalyzes the oxidation of 5,10-methylenetetrahydrofolate to 5,10-methenyltetrahydrofolate and then the hydrolysis of 5,10-methenyltetrahydrofolate to 10-formyltetrahydrofolate. The polypeptide is Bifunctional protein FolD (Wigglesworthia glossinidia brevipalpis).